The primary structure comprises 193 residues: Ion-translocating oxidoreductase complex subunit A (193 aa).

6 helical membrane passes run 5–25 (LLLF…FLGL), 47–67 (FVMT…LIPL), 72–92 (LRTM…EMVV), 102–122 (LLGI…VALL), 134–154 (ALYG…FAAI), and 171–191 (AIAL…SGLV).

Belongs to the NqrDE/RnfAE family. In terms of assembly, the complex is composed of six subunits: RsxA, RsxB, RsxC, RsxD, RsxE and RsxG.

It is found in the cell inner membrane. Part of a membrane-bound complex that couples electron transfer with translocation of ions across the membrane. Required to maintain the reduced state of SoxR. This Escherichia coli O45:K1 (strain S88 / ExPEC) protein is Ion-translocating oxidoreductase complex subunit A.